We begin with the raw amino-acid sequence, 384 residues long: NADH-ubiquinone oxidoreductase chain 5 (384 aa).

Helical transmembrane passes span 12–32, 50–70, 92–112, 113–133, 153–173, 183–203, 215–235, 244–264, 274–293, 298–320, 343–363, and 364–384; these read FYFLMSISLSLFLISLKFLLM, IVMTFLFDWMSLMFMSFVLLI, ILLVLMFVMSMMMLIISPNLI, SILLGWDGLGLVSYCLVIYFQ, VALLLAIAWMLNYGSWNYIFY, MMIIGGLVMLAAMTKSAQIPF, TPVSALVHSSTLVTAGVYLLI, WWMAQFLLLVSGLTMFMAGLG, IIALSTLSQLGLMMSILSMG, AFFHLLTHALFKALLFMCAGSII, CSCFNVANLALCGMPFLAGFY, and SKDLILEMVMLSYVNVFSFFL.

Belongs to the complex I subunit 5 family.

It localises to the mitochondrion inner membrane. It catalyses the reaction a ubiquinone + NADH + 5 H(+)(in) = a ubiquinol + NAD(+) + 4 H(+)(out). Core subunit of the mitochondrial membrane respiratory chain NADH dehydrogenase (Complex I) that is believed to belong to the minimal assembly required for catalysis. Complex I functions in the transfer of electrons from NADH to the respiratory chain. The immediate electron acceptor for the enzyme is believed to be ubiquinone. The chain is NADH-ubiquinone oxidoreductase chain 5 (ND5) from Anopheles arabiensis (Mosquito).